Consider the following 379-residue polypeptide: L-lactate dehydrogenase (379 aa).

The FMN hydroxy acid dehydrogenase domain maps to 1–379; sequence MIISSSTDYR…ISPDSLVRGL (379 aa). Tyr24 contributes to the substrate binding site. The FMN site is built by Ser106 and Gln127. Tyr129 serves as a coordination point for substrate. Thr155 is an FMN binding site. Residue Arg164 participates in substrate binding. Lys251 lines the FMN pocket. His275 serves as the catalytic Proton acceptor. Substrate is bound at residue Arg278. FMN is bound at residue 306–330; sequence DSGIRSGLDVVRMIAQGADGVLIGR.

The protein belongs to the FMN-dependent alpha-hydroxy acid dehydrogenase family. FMN serves as cofactor.

The protein resides in the cell inner membrane. It catalyses the reaction (S)-lactate + A = pyruvate + AH2. Catalyzes the conversion of L-lactate to pyruvate. Is coupled to the respiratory chain. The polypeptide is L-lactate dehydrogenase (Allorhizobium ampelinum (strain ATCC BAA-846 / DSM 112012 / S4) (Agrobacterium vitis (strain S4))).